The chain runs to 272 residues: 3-methyl-2-oxobutanoate hydroxymethyltransferase (272 aa).

Asp-50 and Asp-89 together coordinate Mg(2+). 3-methyl-2-oxobutanoate contacts are provided by residues 50 to 51, Asp-89, and Lys-119; that span reads DS. Glu-121 is a Mg(2+) binding site. Glu-188 acts as the Proton acceptor in catalysis.

It belongs to the PanB family. In terms of assembly, homodecamer; pentamer of dimers. Mg(2+) serves as cofactor.

Its subcellular location is the cytoplasm. The catalysed reaction is 3-methyl-2-oxobutanoate + (6R)-5,10-methylene-5,6,7,8-tetrahydrofolate + H2O = 2-dehydropantoate + (6S)-5,6,7,8-tetrahydrofolate. It participates in cofactor biosynthesis; (R)-pantothenate biosynthesis; (R)-pantoate from 3-methyl-2-oxobutanoate: step 1/2. In terms of biological role, catalyzes the reversible reaction in which hydroxymethyl group from 5,10-methylenetetrahydrofolate is transferred onto alpha-ketoisovalerate to form ketopantoate. This Methylobacterium radiotolerans (strain ATCC 27329 / DSM 1819 / JCM 2831 / NBRC 15690 / NCIMB 10815 / 0-1) protein is 3-methyl-2-oxobutanoate hydroxymethyltransferase.